The chain runs to 464 residues: Protein ABHD18 (464 aa).

The N-terminal stretch at 1–24 (MGVSKLDILYRRLLLTKLFIRGWG) is a signal peptide. Asparagine 341 carries N-linked (GlcNAc...) asparagine glycosylation.

This sequence belongs to the AB hydrolase superfamily.

The protein resides in the secreted. This chain is Protein ABHD18, found in Rattus norvegicus (Rat).